The primary structure comprises 536 residues: Apolipoprotein N-acyltransferase (536 aa).

7 helical membrane-spanning segments follow: residues 10–30, 42–62, 76–96, 107–127, 136–158, 181–201, and 212–232; these read IASG…LLAG, AWPV…GSAA, WWFG…AFLV, AAIC…FALA, LRIL…LLTG, IGIW…AVLI, and AVPA…GIRL. The 254-residue stretch at 248–501 folds into the CN hydrolase domain; sequence MQPNLPQDAR…EGVLDSGLPA (254 aa). The Proton acceptor role is filled by Glu295. Residue Lys360 is part of the active site. The active-site Nucleophile is Cys413. A helical transmembrane segment spans residues 509–529; sequence ARVGELPAAVLVALVMMLVLL.

Belongs to the CN hydrolase family. Apolipoprotein N-acyltransferase subfamily.

The protein localises to the cell inner membrane. It catalyses the reaction N-terminal S-1,2-diacyl-sn-glyceryl-L-cysteinyl-[lipoprotein] + a glycerophospholipid = N-acyl-S-1,2-diacyl-sn-glyceryl-L-cysteinyl-[lipoprotein] + a 2-acyl-sn-glycero-3-phospholipid + H(+). Its pathway is protein modification; lipoprotein biosynthesis (N-acyl transfer). Catalyzes the phospholipid dependent N-acylation of the N-terminal cysteine of apolipoprotein, the last step in lipoprotein maturation. This Rhodopseudomonas palustris (strain ATCC BAA-98 / CGA009) protein is Apolipoprotein N-acyltransferase.